Reading from the N-terminus, the 594-residue chain is Aspartate--tRNA(Asp/Asn) ligase (594 aa).

Glu176 provides a ligand contact to L-aspartate. The interval 200-203 (QIFK) is aspartate. L-aspartate is bound at residue Arg222. ATP contacts are provided by residues 222–224 (RDE) and Gln231. Residue His450 participates in L-aspartate binding. Residue Glu484 participates in ATP binding. Arg491 contacts L-aspartate. 536 to 539 (GLDR) contributes to the ATP binding site.

This sequence belongs to the class-II aminoacyl-tRNA synthetase family. Type 1 subfamily. In terms of assembly, homodimer.

Its subcellular location is the cytoplasm. It carries out the reaction tRNA(Asx) + L-aspartate + ATP = L-aspartyl-tRNA(Asx) + AMP + diphosphate. In terms of biological role, aspartyl-tRNA synthetase with relaxed tRNA specificity since it is able to aspartylate not only its cognate tRNA(Asp) but also tRNA(Asn). Reaction proceeds in two steps: L-aspartate is first activated by ATP to form Asp-AMP and then transferred to the acceptor end of tRNA(Asp/Asn). The protein is Aspartate--tRNA(Asp/Asn) ligase of Geobacillus sp. (strain WCH70).